The primary structure comprises 72 residues: MRVEQIAAKALKKLKDDRYKLALVVAKRAEELANGAEPLVNLDKNKYKYTDIALHEIAEDKIVLEGFVETSK.

Belongs to the RNA polymerase subunit omega family. In terms of assembly, the RNAP catalytic core consists of 2 alpha, 1 beta, 1 beta' and 1 omega subunit. When a sigma factor is associated with the core the holoenzyme is formed, which can initiate transcription.

It catalyses the reaction RNA(n) + a ribonucleoside 5'-triphosphate = RNA(n+1) + diphosphate. Its function is as follows. Promotes RNA polymerase assembly. Latches the N- and C-terminal regions of the beta' subunit thereby facilitating its interaction with the beta and alpha subunits. This Campylobacter lari (strain RM2100 / D67 / ATCC BAA-1060) protein is DNA-directed RNA polymerase subunit omega.